The primary structure comprises 244 residues: tRNA pseudouridine synthase A (244 aa).

Asp-52 serves as the catalytic Nucleophile. Tyr-110 contributes to the substrate binding site.

The protein belongs to the tRNA pseudouridine synthase TruA family. Homodimer.

The enzyme catalyses uridine(38/39/40) in tRNA = pseudouridine(38/39/40) in tRNA. Formation of pseudouridine at positions 38, 39 and 40 in the anticodon stem and loop of transfer RNAs. The protein is tRNA pseudouridine synthase A of Caldicellulosiruptor bescii (strain ATCC BAA-1888 / DSM 6725 / KCTC 15123 / Z-1320) (Anaerocellum thermophilum).